The sequence spans 679 residues: Penicillin-binding protein PbpB (679 aa).

Residues 1 to 74 (MSRAAPRRAS…STRARRTRQV (74 aa)) form a disordered region. The Cytoplasmic segment spans residues 1–90 (MSRAAPRRAS…GASFVFRHRT (90 aa)). The span at 42–54 (ARQAQEATKSRPA) shows a compositional bias: polar residues. The chain crosses the membrane as a helical span at residues 91–111 (GNAVILVLMLVAATQLFFLQV). Residues 112 to 679 (SHAAGLRAQA…PGPPLVLQAT (568 aa)) lie on the Extracellular side of the membrane. The active-site Acyl-ester intermediate is S386.

It belongs to the transpeptidase family. In terms of assembly, interacts with Wag31. In terms of processing, cleaved by Rip1 in response to oxidative stress (H(2)O(2)), prevented by Wag31. Cleavage probably occurs near residues 102-103.

The protein resides in the cell membrane. It functions in the pathway cell wall biogenesis; peptidoglycan biosynthesis. Synthesis of cross-linked peptidoglycan from the lipid intermediates. The protein is Penicillin-binding protein PbpB (pbpB) of Mycobacterium tuberculosis (strain ATCC 25618 / H37Rv).